A 143-amino-acid chain; its full sequence is Nucleoside diphosphate kinase (143 aa).

Positions 11, 59, 87, 93, 104, and 114 each coordinate ATP. The active-site Pros-phosphohistidine intermediate is the histidine 117.

This sequence belongs to the NDK family. In terms of assembly, homotetramer. Mg(2+) is required as a cofactor.

It localises to the cytoplasm. The catalysed reaction is a 2'-deoxyribonucleoside 5'-diphosphate + ATP = a 2'-deoxyribonucleoside 5'-triphosphate + ADP. The enzyme catalyses a ribonucleoside 5'-diphosphate + ATP = a ribonucleoside 5'-triphosphate + ADP. Major role in the synthesis of nucleoside triphosphates other than ATP. The ATP gamma phosphate is transferred to the NDP beta phosphate via a ping-pong mechanism, using a phosphorylated active-site intermediate. The chain is Nucleoside diphosphate kinase from Shewanella loihica (strain ATCC BAA-1088 / PV-4).